The primary structure comprises 331 residues: Phosphoribosylformylglycinamidine cyclo-ligase (331 aa).

Belongs to the AIR synthase family.

It localises to the cytoplasm. It catalyses the reaction 2-formamido-N(1)-(5-O-phospho-beta-D-ribosyl)acetamidine + ATP = 5-amino-1-(5-phospho-beta-D-ribosyl)imidazole + ADP + phosphate + H(+). It participates in purine metabolism; IMP biosynthesis via de novo pathway; 5-amino-1-(5-phospho-D-ribosyl)imidazole from N(2)-formyl-N(1)-(5-phospho-D-ribosyl)glycinamide: step 2/2. The chain is Phosphoribosylformylglycinamidine cyclo-ligase from Clostridium botulinum (strain 657 / Type Ba4).